Reading from the N-terminus, the 453-residue chain is Probable glycine dehydrogenase (decarboxylating) subunit 1 (453 aa).

This sequence belongs to the GcvP family. N-terminal subunit subfamily. In terms of assembly, the glycine cleavage system is composed of four proteins: P, T, L and H. In this organism, the P 'protein' is a heterodimer of two subunits.

It carries out the reaction N(6)-[(R)-lipoyl]-L-lysyl-[glycine-cleavage complex H protein] + glycine + H(+) = N(6)-[(R)-S(8)-aminomethyldihydrolipoyl]-L-lysyl-[glycine-cleavage complex H protein] + CO2. Functionally, the glycine cleavage system catalyzes the degradation of glycine. The P protein binds the alpha-amino group of glycine through its pyridoxal phosphate cofactor; CO(2) is released and the remaining methylamine moiety is then transferred to the lipoamide cofactor of the H protein. This chain is Probable glycine dehydrogenase (decarboxylating) subunit 1, found in Dictyoglomus turgidum (strain DSM 6724 / Z-1310).